The following is a 682-amino-acid chain: DNA-directed RNA polymerase subunit beta' (682 aa).

Cys69, Cys71, Cys87, and Cys90 together coordinate Zn(2+). Mg(2+) is bound by residues Asp489, Asp491, and Asp493.

The protein belongs to the RNA polymerase beta' chain family. RpoC1 subfamily. As to quaternary structure, in plastids the minimal PEP RNA polymerase catalytic core is composed of four subunits: alpha, beta, beta', and beta''. When a (nuclear-encoded) sigma factor is associated with the core the holoenzyme is formed, which can initiate transcription. Mg(2+) is required as a cofactor. The cofactor is Zn(2+).

It is found in the plastid. Its subcellular location is the chloroplast. The enzyme catalyses RNA(n) + a ribonucleoside 5'-triphosphate = RNA(n+1) + diphosphate. Functionally, DNA-dependent RNA polymerase catalyzes the transcription of DNA into RNA using the four ribonucleoside triphosphates as substrates. In Agrostis stolonifera (Creeping bentgrass), this protein is DNA-directed RNA polymerase subunit beta'.